Consider the following 828-residue polypeptide: Phenylalanine--tRNA ligase beta subunit (828 aa).

The tRNA-binding domain maps to 44 to 155 (GPVDGPLTVG…GTAEPGADGA (112 aa)). Residues 411-486 (WSPPAIQMPA…RLEGLEVIGS (76 aa)) enclose the B5 domain. D464, D470, E473, and E474 together coordinate Mg(2+). The FDX-ACB domain maps to 734–827 (SPFPAVFQDV…AAEAVGAELR (94 aa)).

The protein belongs to the phenylalanyl-tRNA synthetase beta subunit family. Type 1 subfamily. Tetramer of two alpha and two beta subunits. The cofactor is Mg(2+).

The protein resides in the cytoplasm. It catalyses the reaction tRNA(Phe) + L-phenylalanine + ATP = L-phenylalanyl-tRNA(Phe) + AMP + diphosphate + H(+). This is Phenylalanine--tRNA ligase beta subunit from Mycolicibacterium paratuberculosis (strain ATCC BAA-968 / K-10) (Mycobacterium paratuberculosis).